The primary structure comprises 222 residues: MGTVRSQIRPGLYAITDNRLTPADTLIVSVEAALAGGARLVQYRDKGSTASERLVQARNLNSLCQGFDVPLLINDDPELAARVGAAGVHLGQDDCSLVDARRLLGEHAIIGITCHHSLNLAQTAVDGGADYLAFGRFYDSATKPGAPPASPDVLTEAKALGLPITAIGGITGNNAEPLIRAGADLVAVVGGLFGGQPSDIEARAKAFNRQFARHHPLFSLSE.

Residues 42–46 (QYRDK) and Asn-74 contribute to the 4-amino-2-methyl-5-(diphosphooxymethyl)pyrimidine site. Residues Asp-75 and Asp-94 each contribute to the Mg(2+) site. Position 113 (Thr-113) interacts with 4-amino-2-methyl-5-(diphosphooxymethyl)pyrimidine. 140–142 (SAT) lines the 2-[(2R,5Z)-2-carboxy-4-methylthiazol-5(2H)-ylidene]ethyl phosphate pocket. Lys-143 is a binding site for 4-amino-2-methyl-5-(diphosphooxymethyl)pyrimidine. 2-[(2R,5Z)-2-carboxy-4-methylthiazol-5(2H)-ylidene]ethyl phosphate is bound at residue Gly-169.

This sequence belongs to the thiamine-phosphate synthase family. Mg(2+) serves as cofactor.

The catalysed reaction is 2-[(2R,5Z)-2-carboxy-4-methylthiazol-5(2H)-ylidene]ethyl phosphate + 4-amino-2-methyl-5-(diphosphooxymethyl)pyrimidine + 2 H(+) = thiamine phosphate + CO2 + diphosphate. It carries out the reaction 2-(2-carboxy-4-methylthiazol-5-yl)ethyl phosphate + 4-amino-2-methyl-5-(diphosphooxymethyl)pyrimidine + 2 H(+) = thiamine phosphate + CO2 + diphosphate. It catalyses the reaction 4-methyl-5-(2-phosphooxyethyl)-thiazole + 4-amino-2-methyl-5-(diphosphooxymethyl)pyrimidine + H(+) = thiamine phosphate + diphosphate. Its pathway is cofactor biosynthesis; thiamine diphosphate biosynthesis; thiamine phosphate from 4-amino-2-methyl-5-diphosphomethylpyrimidine and 4-methyl-5-(2-phosphoethyl)-thiazole: step 1/1. In terms of biological role, condenses 4-methyl-5-(beta-hydroxyethyl)thiazole monophosphate (THZ-P) and 2-methyl-4-amino-5-hydroxymethyl pyrimidine pyrophosphate (HMP-PP) to form thiamine monophosphate (TMP). This Marinobacter nauticus (strain ATCC 700491 / DSM 11845 / VT8) (Marinobacter aquaeolei) protein is Thiamine-phosphate synthase.